The sequence spans 65 residues: Large ribosomal subunit protein bL35 (65 aa).

Belongs to the bacterial ribosomal protein bL35 family.

In Thermoanaerobacter sp. (strain X514), this protein is Large ribosomal subunit protein bL35.